The following is a 504-amino-acid chain: Deoxyguanosinetriphosphate triphosphohydrolase (504 aa).

In terms of domain architecture, HD spans 66–273 (RLTHSMEVQQ…MEAADDISYC (208 aa)).

It belongs to the dGTPase family. Type 1 subfamily. As to quaternary structure, homotetramer. Requires Mg(2+) as cofactor.

It catalyses the reaction dGTP + H2O = 2'-deoxyguanosine + triphosphate + H(+). DGTPase preferentially hydrolyzes dGTP over the other canonical NTPs. This is Deoxyguanosinetriphosphate triphosphohydrolase from Enterobacter sp. (strain 638).